A 410-amino-acid polypeptide reads, in one-letter code: Beta-arrestin-1 (410 aa).

The interaction with SRC stretch occupies residues 1–163; that stretch reads MGDKGTRVFK…LEEKIHKRNS (163 aa). Residues 45–86 are interaction with CHRM2; it reads PEYLKERRVYVTLTCAFRYGREDLDVLGLTFRKDLFVANVQS. Tyr-47 is subject to Phosphotyrosine. The 1D-myo-inositol hexakisphosphate site is built by Lys-250, Met-255, Lys-324, and Lys-326. An interaction with TRAF6 region spans residues 318–410; it reads IVSYKVKVKL…GTGSPQLNNR (93 aa). Positions 385 to 395 match the [DE]-X(1,2)-F-X-X-[FL]-X-X-X-R motif motif; that stretch reads RQRLKGMKDDK. The interval 389–410 is disordered; that stretch reads KGMKDDKEEEENGTGSPQLNNR. Over residues 401–410 the composition is skewed to polar residues; sequence GTGSPQLNNR. Ser-404 bears the Phosphoserine; by GRK5 mark.

The protein belongs to the arrestin family. Monomer. Homodimer. Homooligomer; the self-association is mediated by InsP6-binding. Heterooligomer with ARRB2; the association is mediated by InsP6-binding. Interacts with ADRB2 (phosphorylated). Interacts with CHRM2 (phosphorylated). Interacts with LHCGR. Interacts with CYTH2 and CASR. Interacts with AP2B1 (dephosphorylated); phosphorylation of AP2B1 disrupts the interaction. Interacts (dephosphorylated at Ser-404) with CLTC. Interacts with CCR2 and GRK2. Interacts with CRR5. Interacts with PTAFR (phosphorylated on serine residues). Interacts with CLTC and MAP2K3. Interacts with CREB1. Interacts with TRAF6. Interacts with IGF1R and MDM2. Interacts with C5AR1. Interacts with PDE4D. Interacts with SRC (via the SH3 domain and the protein kinase domain); the interaction is independent of the phosphorylation state of SRC C-terminus. Interacts with TACR1. Interacts with RAF1. Interacts with CHUK, IKBKB and MAP3K14. Interacts with DVL1; the interaction is enhanced by phosphorylation of DVL1. Interacts with DVL2; the interaction is enhanced by phosphorylation of DVL2. Interacts with IGF1R. Associates with MAP kinase p38. Part of a MAPK signaling complex consisting of TACR1, ARRB1, SRC, MAPK1 (activated) and MAPK3 (activated). Part of a MAPK signaling complex consisting of F2RL1, ARRB1, RAF1, MAPK1 (activated) and MAPK3 (activated). Interacts with GPR143. Interacts with MAP2K4/MKK4. Interacts with HCK and CXCR1 (phosphorylated). Interacts with ACKR3 and ACKR4. Interacts with ARRDC1; the interaction is direct. Interacts with GPR61, GPR62 and GPR135. In terms of processing, constitutively phosphorylated at in the cytoplasm. At the plasma membrane, is rapidly dephosphorylated, a process that is required for clathrin binding and ADRB2 endocytosis but not for ADRB2 binding and desensitization. Once internalized, is rephosphorylated. Post-translationally, the ubiquitination status appears to regulate the formation and trafficking of beta-arrestin-GPCR complexes and signaling. Ubiquitination appears to occur GPCR-specific. Ubiquitinated by MDM2; the ubiquitination is required for rapid internalization of ADRB2. Deubiquitinated by USP33; the deubiquitination leads to a dissociation of the beta-arrestin-GPCR complex. Stimulation of a class A GPCR, such as ADRB2, induces transient ubiquitination and subsequently promotes association with USP33.

It localises to the cytoplasm. Its subcellular location is the nucleus. The protein localises to the cell membrane. The protein resides in the membrane. It is found in the clathrin-coated pit. It localises to the cell projection. Its subcellular location is the pseudopodium. The protein localises to the cytoplasmic vesicle. In terms of biological role, functions in regulating agonist-mediated G-protein coupled receptor (GPCR) signaling by mediating both receptor desensitization and resensitization processes. During homologous desensitization, beta-arrestins bind to the GPRK-phosphorylated receptor and sterically preclude its coupling to the cognate G-protein; the binding appears to require additional receptor determinants exposed only in the active receptor conformation. The beta-arrestins target many receptors for internalization by acting as endocytic adapters (CLASPs, clathrin-associated sorting proteins) and recruiting the GPRCs to the adapter protein 2 complex 2 (AP-2) in clathrin-coated pits (CCPs). However, the extent of beta-arrestin involvement appears to vary significantly depending on the receptor, agonist and cell type. Internalized arrestin-receptor complexes traffic to intracellular endosomes, where they remain uncoupled from G-proteins. Two different modes of arrestin-mediated internalization occur. Class A receptors, like ADRB2, OPRM1, ENDRA, D1AR and ADRA1B dissociate from beta-arrestin at or near the plasma membrane and undergo rapid recycling. Class B receptors, like AVPR2, AGTR1, NTSR1, TRHR and TACR1 internalize as a complex with arrestin and traffic with it to endosomal vesicles, presumably as desensitized receptors, for extended periods of time. Receptor resensitization then requires that receptor-bound arrestin is removed so that the receptor can be dephosphorylated and returned to the plasma membrane. Involved in internalization of P2RY4 and UTP-stimulated internalization of P2RY2. Involved in phosphorylation-dependent internalization of OPRD1 ands subsequent recycling. Involved in the degradation of cAMP by recruiting cAMP phosphodiesterases to ligand-activated receptors. Beta-arrestins function as multivalent adapter proteins that can switch the GPCR from a G-protein signaling mode that transmits short-lived signals from the plasma membrane via small molecule second messengers and ion channels to a beta-arrestin signaling mode that transmits a distinct set of signals that are initiated as the receptor internalizes and transits the intracellular compartment. Acts as a signaling scaffold for MAPK pathways such as MAPK1/3 (ERK1/2). ERK1/2 activated by the beta-arrestin scaffold is largely excluded from the nucleus and confined to cytoplasmic locations such as endocytic vesicles, also called beta-arrestin signalosomes. Recruits c-Src/SRC to ADRB2 resulting in ERK activation. GPCRs for which the beta-arrestin-mediated signaling relies on both ARRB1 and ARRB2 (codependent regulation) include ADRB2, F2RL1 and PTH1R. For some GPCRs the beta-arrestin-mediated signaling relies on either ARRB1 or ARRB2 and is inhibited by the other respective beta-arrestin form (reciprocal regulation). Inhibits ERK1/2 signaling in AGTR1- and AVPR2-mediated activation (reciprocal regulation). Is required for SP-stimulated endocytosis of NK1R and recruits c-Src/SRC to internalized NK1R resulting in ERK1/2 activation, which is required for the antiapoptotic effects of SP. Is involved in proteinase-activated F2RL1-mediated ERK activity. Acts as a signaling scaffold for the AKT1 pathway. Is involved in alpha-thrombin-stimulated AKT1 signaling. Is involved in IGF1-stimulated AKT1 signaling leading to increased protection from apoptosis. Involved in activation of the p38 MAPK signaling pathway and in actin bundle formation. Involved in F2RL1-mediated cytoskeletal rearrangement and chemotaxis. Involved in AGTR1-mediated stress fiber formation by acting together with GNAQ to activate RHOA. Appears to function as signaling scaffold involved in regulation of MIP-1-beta-stimulated CCR5-dependent chemotaxis. Involved in attenuation of NF-kappa-B-dependent transcription in response to GPCR or cytokine stimulation by interacting with and stabilizing CHUK. May serve as nuclear messenger for GPCRs. Involved in OPRD1-stimulated transcriptional regulation by translocating to CDKN1B and FOS promoter regions and recruiting EP300 resulting in acetylation of histone H4. Involved in regulation of LEF1 transcriptional activity via interaction with DVL1 and/or DVL2 Also involved in regulation of receptors other than GPCRs. Involved in Toll-like receptor and IL-1 receptor signaling through the interaction with TRAF6 which prevents TRAF6 autoubiquitination and oligomerization required for activation of NF-kappa-B and JUN. Involved in IL8-mediated granule release in neutrophils. Binds phosphoinositides. Binds inositolhexakisphosphate (InsP6). Required for atypical chemokine receptor ACKR2-induced RAC1-LIMK1-PAK1-dependent phosphorylation of cofilin (CFL1) and for the up-regulation of ACKR2 from endosomal compartment to cell membrane, increasing its efficiency in chemokine uptake and degradation. Involved in the internalization of the atypical chemokine receptor ACKR3. Negatively regulates the NOTCH signaling pathway by mediating the ubiquitination and degradation of NOTCH1 by ITCH. Participates in the recruitment of the ubiquitin-protein ligase to the receptor. This chain is Beta-arrestin-1 (ARRB1), found in Macaca fascicularis (Crab-eating macaque).